The chain runs to 315 residues: Ribosomal RNA small subunit methyltransferase H (315 aa).

Residues G37–H39, D57, F83, D105, and Q112 each bind S-adenosyl-L-methionine. The interval E296–R315 is disordered.

This sequence belongs to the methyltransferase superfamily. RsmH family.

It localises to the cytoplasm. It catalyses the reaction cytidine(1402) in 16S rRNA + S-adenosyl-L-methionine = N(4)-methylcytidine(1402) in 16S rRNA + S-adenosyl-L-homocysteine + H(+). Functionally, specifically methylates the N4 position of cytidine in position 1402 (C1402) of 16S rRNA. The protein is Ribosomal RNA small subunit methyltransferase H of Stutzerimonas stutzeri (strain A1501) (Pseudomonas stutzeri).